The sequence spans 90 residues: Acylphosphatase (90 aa).

Residues 3 to 90 (AVHMNASGQV…FEGQDFIVKY (88 aa)) form the Acylphosphatase-like domain. Catalysis depends on residues Arg-18 and Asn-36.

The protein belongs to the acylphosphatase family.

It catalyses the reaction an acyl phosphate + H2O = a carboxylate + phosphate + H(+). The polypeptide is Acylphosphatase (acyP) (Pediococcus pentosaceus (strain ATCC 25745 / CCUG 21536 / LMG 10740 / 183-1w)).